The chain runs to 84 residues: MRGSSNRKIDPRIHYLVPKHEVLSIDEAYKILKELGIRPEQLPWIRASDPVARSINAKPGDIIRIIRKSQLYGEVVSYRYVISG.

The protein belongs to the archaeal Rpo5/eukaryotic RPB5 RNA polymerase subunit family. In terms of assembly, part of the RNA polymerase complex.

The protein resides in the cytoplasm. It catalyses the reaction RNA(n) + a ribonucleoside 5'-triphosphate = RNA(n+1) + diphosphate. Its function is as follows. DNA-dependent RNA polymerase (RNAP) catalyzes the transcription of DNA into RNA using the four ribonucleoside triphosphates as substrates. The protein is DNA-directed RNA polymerase subunit Rpo5 of Saccharolobus islandicus (strain Y.N.15.51 / Yellowstone #2) (Sulfolobus islandicus).